The following is a 140-amino-acid chain: Natriuretic peptides A (140 aa).

The first 24 residues, 1–24, serve as a signal peptide directing secretion; it reads MDTRGSFSCGFLLLLLIQLQPSRA. The propeptide occupies 25–111; sequence NPIYNLSPAK…KRLRGVQMPR (87 aa). Positions 55–94 are disordered; sequence ALESNPDLQEPQTQEEIPPELTDDSDEQKAEPKLASNTPL. Residues 71–80 are compositionally biased toward acidic residues; that stretch reads IPPELTDDSD. A disulfide bridge links Cys-118 with Cys-134.

The protein belongs to the natriuretic peptide family. Cleaved by CORIN upon secretion to produce the functional hormone.

The protein resides in the secreted. In terms of biological role, hormone playing a key role in cardiovascular homeostasis through regulation of natriuresis, diuresis, and vasodilation. Specifically binds and stimulates the cGMP production of the NPR1 receptor. Binds the clearance receptor NPR3. In Gallus gallus (Chicken), this protein is Natriuretic peptides A (NPPA).